A 258-amino-acid chain; its full sequence is Phosphate import ATP-binding protein PstB (258 aa).

The 241-residue stretch at Ile13–Ile253 folds into the ABC transporter domain. Gly45 to Ser52 is a binding site for ATP.

Belongs to the ABC transporter superfamily. Phosphate importer (TC 3.A.1.7) family. As to quaternary structure, the complex is composed of two ATP-binding proteins (PstB), two transmembrane proteins (PstC and PstA) and a solute-binding protein (PstS).

It localises to the cell membrane. It carries out the reaction phosphate(out) + ATP + H2O = ADP + 2 phosphate(in) + H(+). Functionally, part of the ABC transporter complex PstSACB involved in phosphate import. Responsible for energy coupling to the transport system. The polypeptide is Phosphate import ATP-binding protein PstB (Methanosarcina barkeri (strain Fusaro / DSM 804)).